Reading from the N-terminus, the 461-residue chain is MVLVITEPIKSQSKTVCVIGAGPSGLVSARELKKEGHKVVVMEQNHDVGGQWLYQPNVDEEDTLGKTKTLKVHSSVYSSLRLASPREVMGFSDFPFIAKEGRDSRRFPGHEELLLYLKDFCQVFGLREMIRFNVRVEFVGMVNEDDDDDDDVKKWMVKSVKKSGEVMEEVFDAVVVASGHYSYPRLPTIKGMDLWKRKQLHSHIYRVPEPFCDEVVVVVGCSMSGQDISIELVEVAKEVHLSTKSLDIPPGLSKVIEKHQNLHLHPQIESLEEDGRVIFEDGSCIVADTILYCTGYEYKFPFLESKGRVEIDDNRVGPLFEHTFSPSLSPFLSFVGIPRKLIGFPFFESQAKWIAKLLSGKTSLPSSDQMMQSISDFYLAREADGIPKRNTHDIADFNYSDKYADYIGFPHLEEWRKVLCLSAILNSIENLETYRDSWDDDDLLQETLQDPYFTQLSIPSV.

Residue 20-25 coordinates FAD; that stretch reads GAGPSG. 220 to 225 is an NADP(+) binding site; sequence GCSMSG.

This sequence belongs to the FMO family. Interacts with EER5. FAD serves as cofactor.

In terms of biological role, catalyzes the conversion of methylthioalkyl glucosinolates of any chain length into methylsulfinylalkyl glucosinolates. The protein is Flavin-containing monooxygenase FMO GS-OX-like 8 of Arabidopsis thaliana (Mouse-ear cress).